The sequence spans 449 residues: Sensor protein QseC (449 aa).

The Cytoplasmic segment spans residues 1–12 (MKLTQRLSLRVR). Residues 13 to 33 (LTLIFLILVSITWAISSFVAW) traverse the membrane as a helical segment. At 34 to 161 (RKTTDNVDEL…REDMALAIVA (128 aa)) the chain is on the periplasmic side. A helical membrane pass occupies residues 162-182 (AQLTPWLIALPFMLLILLLLL). One can recognise an HAMP domain in the interval 183 to 235 (HRELRPLKKLAQALRFRSPESETPLDAKGVPSEVRPLVEALNQLFSRIHSMMV). Over 183 to 449 (HRELRPLKKL…EGGFEAVVRW (267 aa)) the chain is Cytoplasmic. In terms of domain architecture, Histidine kinase spans 243–449 (DAAHELRSPL…EGGFEAVVRW (207 aa)). Phosphohistidine; by autocatalysis is present on H246.

It localises to the cell inner membrane. The catalysed reaction is ATP + protein L-histidine = ADP + protein N-phospho-L-histidine.. Functionally, member of a two-component regulatory system QseB/QseC. Activates the flagella regulon by activating transcription of FlhDC. May activate QseB by phosphorylation. The polypeptide is Sensor protein QseC (qseC) (Salmonella typhi).